We begin with the raw amino-acid sequence, 95 residues long: Co-chaperonin GroES (95 aa).

Belongs to the GroES chaperonin family. As to quaternary structure, heptamer of 7 subunits arranged in a ring. Interacts with the chaperonin GroEL.

It is found in the cytoplasm. Functionally, together with the chaperonin GroEL, plays an essential role in assisting protein folding. The GroEL-GroES system forms a nano-cage that allows encapsulation of the non-native substrate proteins and provides a physical environment optimized to promote and accelerate protein folding. GroES binds to the apical surface of the GroEL ring, thereby capping the opening of the GroEL channel. The sequence is that of Co-chaperonin GroES from Staphylococcus saprophyticus subsp. saprophyticus (strain ATCC 15305 / DSM 20229 / NCIMB 8711 / NCTC 7292 / S-41).